We begin with the raw amino-acid sequence, 452 residues long: Pup--protein ligase (452 aa).

Position 9 (Glu-9) interacts with Mg(2+). Arg-53 provides a ligand contact to ATP. Tyr-55 is a Mg(2+) binding site. The active-site Proton acceptor is Asp-57. Mg(2+) is bound at residue Glu-63. Positions 66 and 419 each coordinate ATP.

The protein belongs to the Pup ligase/Pup deamidase family. Pup-conjugating enzyme subfamily.

The enzyme catalyses ATP + [prokaryotic ubiquitin-like protein]-L-glutamate + [protein]-L-lysine = ADP + phosphate + N(6)-([prokaryotic ubiquitin-like protein]-gamma-L-glutamyl)-[protein]-L-lysine.. Its pathway is protein degradation; proteasomal Pup-dependent pathway. The protein operates within protein modification; protein pupylation. In terms of biological role, catalyzes the covalent attachment of the prokaryotic ubiquitin-like protein modifier Pup to the proteasomal substrate proteins, thereby targeting them for proteasomal degradation. This tagging system is termed pupylation. The ligation reaction involves the side-chain carboxylate of the C-terminal glutamate of Pup and the side-chain amino group of a substrate lysine. This chain is Pup--protein ligase, found in Mycolicibacterium gilvum (strain PYR-GCK) (Mycobacterium gilvum (strain PYR-GCK)).